The chain runs to 256 residues: Receptor expression-enhancing protein 3 (256 aa).

3 helical membrane-spanning segments follow: residues 1-21, 42-62, and 68-88; these read MVSWMISRSVVLVFGNLYPAY, WIVFALFTVVETVADLTIAWF, and IKIAFVIWLLSPYTRGASVIY. The tract at residues 177 to 256 is disordered; that stretch reads IMDQPDGAEY…NATTYSNMES (80 aa). Residues 247-256 show a composition bias toward polar residues; that stretch reads NATTYSNMES.

This sequence belongs to the DP1 family.

It is found in the endoplasmic reticulum membrane. In terms of biological role, microtubule-binding protein required to ensure proper cell division and nuclear envelope reassembly by sequestering the endoplasmic reticulum away from chromosomes during mitosis. Probably acts by clearing the endoplasmic reticulum membrane from metaphase chromosomes. In Danio rerio (Zebrafish), this protein is Receptor expression-enhancing protein 3 (reep3).